Reading from the N-terminus, the 226-residue chain is Isoprenyl transferase (226 aa).

Asp12 is a catalytic residue. Asp12 provides a ligand contact to Mg(2+). Substrate-binding positions include 13–16, Trp17, Lys25, His29, and 57–59; these read GNAR and SSE. Asn60 acts as the Proton acceptor in catalysis. Substrate contacts are provided by residues Trp61, Arg63, Arg174, and 180–182; that span reads RIS. Glu193 contributes to the Mg(2+) binding site.

This sequence belongs to the UPP synthase family. As to quaternary structure, homodimer. Mg(2+) serves as cofactor.

Catalyzes the condensation of isopentenyl diphosphate (IPP) with allylic pyrophosphates generating different type of terpenoids. In Rickettsia sibirica (strain ATCC VR-151 / 246), this protein is Isoprenyl transferase.